A 449-amino-acid chain; its full sequence is MTDLHKEWEKVQEMAFASWVNSVLEKRGGVEKISDVSTDLSDGVKLIFFLESVSGKKFPKKFDLEPKTRILRIQNLHLAMLFVDEDLKVKVQGVAAEEFVDNNKKMILGFLWTLYRKYRISVINEGDKSSEEGLLAWVKKTTDGYSGVNITNFKASFRDGNAYLALAHKFDPSVFKYDEFSGKDQIERLNAAFDFAEKGLGIPKLLDAESLSKGNVDERSIILYTSLFFHAYRAKEEREALEASQNSLANKLASLEQSLEGEKTSQDELARQKKELEESLRLIRQQNEQRNQRIADIQSKIDDALRGIDDEKMAKLDLESRLSKTEKDKAILELKLAETLDENERLRNKIEEDKKRAAAEAEGLGLLRTHIGHQITDIAKWQSFLDNPEAVPYTKTPVNLEAELASLQFEEQAKRLGSKVENENISLEKYLSLKEEELKSAGAPKKRTK.

The tract at residues 1–231 (MTDLHKEWEK…ILYTSLFFHA (231 aa)) is actin-binding. Calponin-homology (CH) domains are found at residues 10-119 (KVQE…RKYR) and 128-233 (KSSE…HAYR). Coiled coils occupy residues 232-364 (YRAK…AEGL) and 408-441 (QFEEQAKRLGSKVENENISLEKYLSLKEEELKSA).

It belongs to the cortexillin family. Homodimer; parallel.

It is found in the cytoplasm. Its subcellular location is the cytoskeleton. Actin-bundling protein. When linked to F-actin the actin filaments form preferentially anti-parallel bundles that associate into meshworks. Plays a major role in cytokinesis. The sequence is that of Cortexillin-2 (ctxB) from Heterostelium pallidum (strain ATCC 26659 / Pp 5 / PN500) (Cellular slime mold).